The sequence spans 727 residues: 1,4-alpha-glucan branching enzyme GlgB (727 aa).

Catalysis depends on aspartate 405, which acts as the Nucleophile. The active-site Proton donor is glutamate 458.

This sequence belongs to the glycosyl hydrolase 13 family. GlgB subfamily. As to quaternary structure, monomer.

It carries out the reaction Transfers a segment of a (1-&gt;4)-alpha-D-glucan chain to a primary hydroxy group in a similar glucan chain.. The protein operates within glycan biosynthesis; glycogen biosynthesis. In terms of biological role, catalyzes the formation of the alpha-1,6-glucosidic linkages in glycogen by scission of a 1,4-alpha-linked oligosaccharide from growing alpha-1,4-glucan chains and the subsequent attachment of the oligosaccharide to the alpha-1,6 position. The polypeptide is 1,4-alpha-glucan branching enzyme GlgB (Yersinia enterocolitica serotype O:8 / biotype 1B (strain NCTC 13174 / 8081)).